The following is a 634-amino-acid chain: 1-deoxy-D-xylulose-5-phosphate synthase (634 aa).

Thiamine diphosphate is bound by residues histidine 74 and 115-117; that span reads AHS. A Mg(2+)-binding site is contributed by aspartate 146. Residues 147–148, asparagine 176, tyrosine 283, and glutamate 365 contribute to the thiamine diphosphate site; that span reads GA. Asparagine 176 contacts Mg(2+).

Belongs to the transketolase family. DXPS subfamily. Homodimer. The cofactor is Mg(2+). Requires thiamine diphosphate as cofactor.

It carries out the reaction D-glyceraldehyde 3-phosphate + pyruvate + H(+) = 1-deoxy-D-xylulose 5-phosphate + CO2. Its pathway is metabolic intermediate biosynthesis; 1-deoxy-D-xylulose 5-phosphate biosynthesis; 1-deoxy-D-xylulose 5-phosphate from D-glyceraldehyde 3-phosphate and pyruvate: step 1/1. Its function is as follows. Catalyzes the acyloin condensation reaction between C atoms 2 and 3 of pyruvate and glyceraldehyde 3-phosphate to yield 1-deoxy-D-xylulose-5-phosphate (DXP). The protein is 1-deoxy-D-xylulose-5-phosphate synthase of Burkholderia mallei (strain ATCC 23344).